We begin with the raw amino-acid sequence, 89 residues long: Small ribosomal subunit protein uS19 (89 aa).

It belongs to the universal ribosomal protein uS19 family.

Functionally, protein S19 forms a complex with S13 that binds strongly to the 16S ribosomal RNA. The protein is Small ribosomal subunit protein uS19 of Bacteroides fragilis (strain YCH46).